The following is a 288-amino-acid chain: Protease HtpX homolog (288 aa).

Helical transmembrane passes span 6-26 and 28-48; these read TAFL…YVGG and QGMM…YFFS. His-130 is a binding site for Zn(2+). The active site involves Glu-131. His-134 contacts Zn(2+). The next 2 helical transmembrane spans lie at 140 to 160 and 179 to 199; these read ILTG…ANFA and VIML…QMAI. Glu-204 contacts Zn(2+).

This sequence belongs to the peptidase M48B family. The cofactor is Zn(2+).

Its subcellular location is the cell inner membrane. In Campylobacter concisus (strain 13826), this protein is Protease HtpX homolog.